The following is a 201-amino-acid chain: 3-isopropylmalate dehydratase small subunit (201 aa).

The protein belongs to the LeuD family. LeuD type 1 subfamily. In terms of assembly, heterodimer of LeuC and LeuD.

It carries out the reaction (2R,3S)-3-isopropylmalate = (2S)-2-isopropylmalate. The protein operates within amino-acid biosynthesis; L-leucine biosynthesis; L-leucine from 3-methyl-2-oxobutanoate: step 2/4. In terms of biological role, catalyzes the isomerization between 2-isopropylmalate and 3-isopropylmalate, via the formation of 2-isopropylmaleate. The protein is 3-isopropylmalate dehydratase small subunit of Xanthobacter autotrophicus (strain ATCC BAA-1158 / Py2).